The following is a 506-amino-acid chain: Ribose import ATP-binding protein RbsA 2 (506 aa).

2 consecutive ABC transporter domains span residues 6–241 (LSMT…VGRV) and 254–499 (EKSN…SITI). 38–45 (GENGAGKS) provides a ligand contact to ATP.

It belongs to the ABC transporter superfamily. Ribose importer (TC 3.A.1.2.1) family. In terms of assembly, the complex is composed of an ATP-binding protein (RbsA), two transmembrane proteins (RbsC) and a solute-binding protein (RbsB).

It localises to the cell inner membrane. The catalysed reaction is D-ribose(out) + ATP + H2O = D-ribose(in) + ADP + phosphate + H(+). Part of the ABC transporter complex RbsABC involved in ribose import. Responsible for energy coupling to the transport system. The protein is Ribose import ATP-binding protein RbsA 2 of Agrobacterium fabrum (strain C58 / ATCC 33970) (Agrobacterium tumefaciens (strain C58)).